The chain runs to 164 residues: UPF0304 protein Asuc_0543 (164 aa).

It belongs to the UPF0304 family.

In Actinobacillus succinogenes (strain ATCC 55618 / DSM 22257 / CCUG 43843 / 130Z), this protein is UPF0304 protein Asuc_0543.